A 388-amino-acid polypeptide reads, in one-letter code: Chorismate synthase (388 aa).

NADP(+) contacts are provided by R39 and R45. A disordered region spans residues 95 to 115 (EKQKKIRRVSKPRPGHADLVG). A compositionally biased stretch (basic residues) spans 98–108 (KKIRRVSKPRP). FMN contacts are provided by residues 130–132 (RSS), 251–252 (NA), G296, 311–315 (KPIPT), and R337.

It belongs to the chorismate synthase family. In terms of assembly, homotetramer. Requires FMNH2 as cofactor.

It carries out the reaction 5-O-(1-carboxyvinyl)-3-phosphoshikimate = chorismate + phosphate. Its pathway is metabolic intermediate biosynthesis; chorismate biosynthesis; chorismate from D-erythrose 4-phosphate and phosphoenolpyruvate: step 7/7. Catalyzes the anti-1,4-elimination of the C-3 phosphate and the C-6 proR hydrogen from 5-enolpyruvylshikimate-3-phosphate (EPSP) to yield chorismate, which is the branch point compound that serves as the starting substrate for the three terminal pathways of aromatic amino acid biosynthesis. This reaction introduces a second double bond into the aromatic ring system. This is Chorismate synthase from Enterococcus faecalis (strain ATCC 700802 / V583).